A 351-amino-acid chain; its full sequence is Uroporphyrinogen decarboxylase (351 aa).

Substrate-binding positions include R26–R30, F45, D76, Y153, S208, and H323.

Belongs to the uroporphyrinogen decarboxylase family. In terms of assembly, homodimer.

It is found in the cytoplasm. The catalysed reaction is uroporphyrinogen III + 4 H(+) = coproporphyrinogen III + 4 CO2. It functions in the pathway porphyrin-containing compound metabolism; protoporphyrin-IX biosynthesis; coproporphyrinogen-III from 5-aminolevulinate: step 4/4. Functionally, catalyzes the decarboxylation of four acetate groups of uroporphyrinogen-III to yield coproporphyrinogen-III. The chain is Uroporphyrinogen decarboxylase from Prochlorococcus marinus (strain SARG / CCMP1375 / SS120).